Here is a 304-residue protein sequence, read N- to C-terminus: Acetyl-coenzyme A carboxylase carboxyl transferase subunit beta (304 aa).

The CoA carboxyltransferase N-terminal domain maps to 23 to 292; it reads VWTKCDSCGQ…PNPEAPREGV (270 aa). C27, C30, C46, and C49 together coordinate Zn(2+). Residues 27–49 form a C4-type zinc finger; sequence CDSCGQVLYRAELERNLEVCPKC. Residues 285 to 304 form a disordered region; the sequence is PEAPREGVVVPPVPDQEPEA. Over residues 295 to 304 the composition is skewed to pro residues; it reads PPVPDQEPEA.

This sequence belongs to the AccD/PCCB family. In terms of assembly, acetyl-CoA carboxylase is a heterohexamer composed of biotin carboxyl carrier protein (AccB), biotin carboxylase (AccC) and two subunits each of ACCase subunit alpha (AccA) and ACCase subunit beta (AccD). The cofactor is Zn(2+).

It localises to the cytoplasm. The catalysed reaction is N(6)-carboxybiotinyl-L-lysyl-[protein] + acetyl-CoA = N(6)-biotinyl-L-lysyl-[protein] + malonyl-CoA. It functions in the pathway lipid metabolism; malonyl-CoA biosynthesis; malonyl-CoA from acetyl-CoA: step 1/1. In terms of biological role, component of the acetyl coenzyme A carboxylase (ACC) complex. Biotin carboxylase (BC) catalyzes the carboxylation of biotin on its carrier protein (BCCP) and then the CO(2) group is transferred by the transcarboxylase to acetyl-CoA to form malonyl-CoA. The polypeptide is Acetyl-coenzyme A carboxylase carboxyl transferase subunit beta (Escherichia coli O6:H1 (strain CFT073 / ATCC 700928 / UPEC)).